Consider the following 216-residue polypeptide: Probable GTP-binding protein EngB (216 aa).

The 175-residue stretch at 27–201 (EGIEVAFAGR…REKLDTWFSE (175 aa)) folds into the EngB-type G domain. Residues 35 to 42 (GRSNAGKS), 62 to 66 (GRTQL), 80 to 83 (DLPG), 147 to 150 (TKAD), and 180 to 182 (FSS) each bind GTP. The Mg(2+) site is built by S42 and T64.

This sequence belongs to the TRAFAC class TrmE-Era-EngA-EngB-Septin-like GTPase superfamily. EngB GTPase family. It depends on Mg(2+) as a cofactor.

In terms of biological role, necessary for normal cell division and for the maintenance of normal septation. The chain is Probable GTP-binding protein EngB from Yersinia pestis bv. Antiqua (strain Angola).